The following is a 321-amino-acid chain: Beta-ketoacyl-[acyl-carrier-protein] synthase III (321 aa).

Residues C116 and H248 contribute to the active site. The interval 249-253 is ACP-binding; sequence QANLR. N278 is an active-site residue.

The protein belongs to the thiolase-like superfamily. FabH family. As to quaternary structure, homodimer.

Its subcellular location is the cytoplasm. The catalysed reaction is malonyl-[ACP] + acetyl-CoA + H(+) = 3-oxobutanoyl-[ACP] + CO2 + CoA. It participates in lipid metabolism; fatty acid biosynthesis. Catalyzes the condensation reaction of fatty acid synthesis by the addition to an acyl acceptor of two carbons from malonyl-ACP. Catalyzes the first condensation reaction which initiates fatty acid synthesis and may therefore play a role in governing the total rate of fatty acid production. Possesses both acetoacetyl-ACP synthase and acetyl transacylase activities. Its substrate specificity determines the biosynthesis of branched-chain and/or straight-chain of fatty acids. The polypeptide is Beta-ketoacyl-[acyl-carrier-protein] synthase III (Yersinia enterocolitica serotype O:8 / biotype 1B (strain NCTC 13174 / 8081)).